The sequence spans 423 residues: Putative competence-damage inducible protein (423 aa).

It belongs to the CinA family.

In Streptococcus equi subsp. equi (strain 4047), this protein is Putative competence-damage inducible protein.